Reading from the N-terminus, the 91-residue chain is PqqA binding protein (91 aa).

Belongs to the PqqD family. In terms of assembly, monomer. Interacts with PqqE.

Its pathway is cofactor biosynthesis; pyrroloquinoline quinone biosynthesis. Functionally, functions as a PqqA binding protein and presents PqqA to PqqE, in the pyrroloquinoline quinone (PQQ) biosynthetic pathway. This Pseudomonas fluorescens (strain SBW25) protein is PqqA binding protein.